Here is a 388-residue protein sequence, read N- to C-terminus: STE20-related kinase adapter protein strd-1 (388 aa).

Residues 52-335 enclose the Protein kinase domain; the sequence is YDCVRYMGTC…ASDLKSSAWL (284 aa). ATP contacts are provided by residues 58–66 and Lys82; that span reads MGTCNGGQI.

This sequence belongs to the protein kinase superfamily. STE Ser/Thr protein kinase family. STE20 subfamily. As to quaternary structure, interacts with sad-1. Interacts with par-4. Expressed in nervous system, pharynx and excretory canal. Expressed in germline.

It localises to the perikaryon. The protein localises to the nucleus. It is found in the cell projection. Its subcellular location is the dendrite. The protein resides in the axon. It localises to the synapse. The protein localises to the cytoplasm. It is found in the cell cortex. In terms of biological role, pseudokinase which may act as an adapter for kinases sad-1 and par-4 and thereby is involved in several developmental processes. Regulates cell-autonomously both neuronal polarity and synaptic organization when bound to sad-1. Required for sad-1 localization to synapses. Required to establish germline stem cell (GSC) quiescence during dauer development, to promote cell shedding during embryogenesis and to control asymmetric cell division of the Q.p neuroblast lineage, probably when bound to par-4. May be involved in maintaining the integrity of the early embryonic cortex when bound to par-4. The polypeptide is STE20-related kinase adapter protein strd-1 (Caenorhabditis elegans).